Here is a 1168-residue protein sequence, read N- to C-terminus: DNA-directed RNA polymerase subunit beta (1168 aa).

The protein belongs to the RNA polymerase beta chain family. As to quaternary structure, the RNAP catalytic core consists of 2 alpha, 1 beta, 1 beta' and 1 omega subunit. When a sigma factor is associated with the core the holoenzyme is formed, which can initiate transcription.

The catalysed reaction is RNA(n) + a ribonucleoside 5'-triphosphate = RNA(n+1) + diphosphate. Its function is as follows. DNA-dependent RNA polymerase catalyzes the transcription of DNA into RNA using the four ribonucleoside triphosphates as substrates. The sequence is that of DNA-directed RNA polymerase subunit beta from Rhodococcus opacus (strain B4).